The following is a 245-amino-acid chain: 1-(5-phosphoribosyl)-5-[(5-phosphoribosylamino)methylideneamino] imidazole-4-carboxamide isomerase (245 aa).

Residue Asp-7 is the Proton acceptor of the active site. Asp-129 serves as the catalytic Proton donor.

The protein belongs to the HisA/HisF family.

It localises to the cytoplasm. It carries out the reaction 1-(5-phospho-beta-D-ribosyl)-5-[(5-phospho-beta-D-ribosylamino)methylideneamino]imidazole-4-carboxamide = 5-[(5-phospho-1-deoxy-D-ribulos-1-ylimino)methylamino]-1-(5-phospho-beta-D-ribosyl)imidazole-4-carboxamide. The protein operates within amino-acid biosynthesis; L-histidine biosynthesis; L-histidine from 5-phospho-alpha-D-ribose 1-diphosphate: step 4/9. The polypeptide is 1-(5-phosphoribosyl)-5-[(5-phosphoribosylamino)methylideneamino] imidazole-4-carboxamide isomerase (Escherichia coli (strain 55989 / EAEC)).